The chain runs to 156 residues: MSRRKKAPIRQVLSDPIFNSKTITKLINTIMLDGKKSIAERILYQAFEIIKTKTNKDPMEVFQLALDNITPQLEVKTRRVGGTNYQVPMEVTKRRKETLSLRWLIHYSRLRSEKTMQECLANEIIDASNKTGSSIKKREDTHKMAEANKAFAHFRW.

Belongs to the universal ribosomal protein uS7 family. In terms of assembly, part of the 30S ribosomal subunit. Contacts proteins S9 and S11.

In terms of biological role, one of the primary rRNA binding proteins, it binds directly to 16S rRNA where it nucleates assembly of the head domain of the 30S subunit. Is located at the subunit interface close to the decoding center, probably blocks exit of the E-site tRNA. The chain is Small ribosomal subunit protein uS7 from Mycoplasma mobile (strain ATCC 43663 / 163K / NCTC 11711) (Mesomycoplasma mobile).